The following is a 426-amino-acid chain: Gamma-glutamyl phosphate reductase (426 aa).

Belongs to the gamma-glutamyl phosphate reductase family.

It localises to the cytoplasm. It catalyses the reaction L-glutamate 5-semialdehyde + phosphate + NADP(+) = L-glutamyl 5-phosphate + NADPH + H(+). It participates in amino-acid biosynthesis; L-proline biosynthesis; L-glutamate 5-semialdehyde from L-glutamate: step 2/2. Functionally, catalyzes the NADPH-dependent reduction of L-glutamate 5-phosphate into L-glutamate 5-semialdehyde and phosphate. The product spontaneously undergoes cyclization to form 1-pyrroline-5-carboxylate. The chain is Gamma-glutamyl phosphate reductase from Cupriavidus metallidurans (strain ATCC 43123 / DSM 2839 / NBRC 102507 / CH34) (Ralstonia metallidurans).